Reading from the N-terminus, the 593-residue chain is Probable E3 ubiquitin-protein ligase ARI2 (593 aa).

Residues 120-334 (SMMSCDICVE…ISGHSCGRFQ (215 aa)) are TRIAD supradomain. Zn(2+) contacts are provided by C124, C127, C141, H143, C146, C149, C168, C173, C215, C221, C237, C239, C244, C247, H252, C257, C284, and C287. The RING-type 1 zinc finger occupies 124–173 (CDICVEDVPGYQLTRMDCGHSFCNNCWTGHFTVKINEGQSKRIICMAHKC). The IBR-type zinc finger occupies 195 to 257 (EKFDRFLLES…SSQAHSPCSC (63 aa)). The RING-type 2; atypical zinc-finger motif lies at 284 to 312 (CPKCHKPVEKNGGCNLVTCLCRQSFCWLC). C297 is an active-site residue. Positions 302, 304, 309, 312, 320, and 330 each coordinate Zn(2+).

Belongs to the RBR family. Ariadne subfamily. Zn(2+) serves as cofactor. In terms of tissue distribution, ubiquitous.

It carries out the reaction [E2 ubiquitin-conjugating enzyme]-S-ubiquitinyl-L-cysteine + [acceptor protein]-L-lysine = [E2 ubiquitin-conjugating enzyme]-L-cysteine + [acceptor protein]-N(6)-ubiquitinyl-L-lysine.. It participates in protein modification; protein ubiquitination. Functionally, might act as an E3 ubiquitin-protein ligase, or as part of E3 complex, which accepts ubiquitin from specific E2 ubiquitin-conjugating enzymes and then transfers it to substrates. The polypeptide is Probable E3 ubiquitin-protein ligase ARI2 (ARI2) (Arabidopsis thaliana (Mouse-ear cress)).